The following is a 355-amino-acid chain: MADKRAGTPEAAARPPPGLAREGDARTVPAARAREAGGRGSLHPAAGPGTAFPSPGRGEAASTATTPSLENGRVRDEAPETCGAEGLGTRAGASEKAEDANKEEGAIFKKEPAEEVEKQQEGEEKQEVAAEAQEGPRLLNLGALIVDPLEAIQWEAEAVSAQADRAYLPLERRFGRMHRLYLARRSFIIQNIPGFWVTAFLNHPQLSAMISPRDEDMLCYLMNLEVRELRHSRTGCKFKFRFWSNPYFQNKVIVKEYECRASGRVVSIATRIRWHWGQEPPALVHRNRDTVRSFFSWFSQHSLPEADRVAQIIKDDLWPNPLQYYLLGDRPCRARGGLARWPTETPSRPYGFQSG.

The interval 1 to 131 is disordered; sequence MADKRAGTPE…GEEKQEVAAE (131 aa). Residues 93-128 are compositionally biased toward basic and acidic residues; the sequence is ASEKAEDANKEEGAIFKKEPAEEVEKQQEGEEKQEV.

Belongs to the nucleosome assembly protein (NAP) family.

This chain is Putative testis-specific Y-encoded-like protein 3 (TSPY26P), found in Homo sapiens (Human).